Reading from the N-terminus, the 1033-residue chain is MAYAHLFTFSNFTFLRGASHPAEMVEQAYRLGYDAIALTDECSLAGAVKAHVMAEECGIKLIVGSYFKLSNNCELIALAPDRAAYAELSGFITLARRRADKGEYTAHMDDLRFRLQTCLIIWLPTANTATEDNARIFSAAFKQRLWLGVGHQLAGGEQRLFQQWQNLAATYQLPMVASHLALMHSAERKPLQDVLTAINHNTSVSQLGTRLQSNGENYLKAIDEVFYLYPPGLIKQTLLIAERCNFSLNELKYQYPQELVPKGLSPIAHLRALVDSGKARRWPGGVPAQAEAILAKELALIEELHYEYYFLTVYDIVAFARQQNILCQGRGSAANSVVCYCLFITEIAPGQINVLFERFISKERDEPPDIDVDFEHQRREDVIQYIYTKYSRQRAALAATVISYRSRSAIRDVGKALGLDPALVDHLAKSLAWWDRTGDLVKRIEAAGVQTERQLVQQFFALVQQIIGFPRHLSQHVGGFVITQDKVSDLVPVENASMPGRTVIQWDKEDLEAMGLLKVDILALGMLTALRKTLAMVNRYEPAIASLADIPPEDPHTYDMLCAADTVGVFQIESRAQMSMLPRLRPRTFYDLVIEIAIVRPGPIQGDMVHPYLRRRDGLEPVSYQSPDIADVLKPTLGVPIFQEQAIRLAMVAAGFSGGEADRLRRAMASWGKNGNLLQFEETFIQGMLNNGYELDFAHRLFEQIKGFGGYGFPESHSASFAILCYASSWLKCHHPAAFYCALLNSQPMGFYSPSQLIQDARRHGIPVLPVDVNHSEAESALEPANSYRTPWAIRLGFTRIKGLDSEAAQRIADNRAQQPYRDIQQLARRSGLSRADLQKLAAADALHSLAGNRHLAHWQAASVEAQAGLFDDEPPPGDALLTAPPSLEKDLTSDYNTTGLSLRVHPMGILRQEYPFSRCKQQRQLSGLSHGRFVQVAGLVTGRQRPGTAKGTLFLTLEDETGNINVVVWKSTQERYRKALLTSKLLIVKGHLERSTPTATTDATPVIHVVAGQLLDYSDRLESLALRSRDFH.

The protein belongs to the DNA polymerase type-C family. DnaE2 subfamily.

Its subcellular location is the cytoplasm. The catalysed reaction is DNA(n) + a 2'-deoxyribonucleoside 5'-triphosphate = DNA(n+1) + diphosphate. Its function is as follows. DNA polymerase involved in damage-induced mutagenesis and translesion synthesis (TLS). It is not the major replicative DNA polymerase. This is Error-prone DNA polymerase from Teredinibacter turnerae (strain ATCC 39867 / T7901).